Consider the following 394-residue polypeptide: 1-deoxy-D-xylulose 5-phosphate reductoisomerase (394 aa).

8 residues coordinate NADPH: T10, G11, S12, I13, G38, R39, N40, and N123. A 1-deoxy-D-xylulose 5-phosphate-binding site is contributed by K124. An NADPH-binding site is contributed by E125. D149 contributes to the Mn(2+) binding site. Positions 150, 151, 175, and 198 each coordinate 1-deoxy-D-xylulose 5-phosphate. Residue E151 coordinates Mn(2+). G204 lines the NADPH pocket. Positions 211, 216, 217, and 220 each coordinate 1-deoxy-D-xylulose 5-phosphate. A Mn(2+)-binding site is contributed by E220.

The protein belongs to the DXR family. Mg(2+) is required as a cofactor. Requires Mn(2+) as cofactor.

The enzyme catalyses 2-C-methyl-D-erythritol 4-phosphate + NADP(+) = 1-deoxy-D-xylulose 5-phosphate + NADPH + H(+). Its pathway is isoprenoid biosynthesis; isopentenyl diphosphate biosynthesis via DXP pathway; isopentenyl diphosphate from 1-deoxy-D-xylulose 5-phosphate: step 1/6. In terms of biological role, catalyzes the NADPH-dependent rearrangement and reduction of 1-deoxy-D-xylulose-5-phosphate (DXP) to 2-C-methyl-D-erythritol 4-phosphate (MEP). The sequence is that of 1-deoxy-D-xylulose 5-phosphate reductoisomerase from Cereibacter sphaeroides (strain ATCC 17023 / DSM 158 / JCM 6121 / CCUG 31486 / LMG 2827 / NBRC 12203 / NCIMB 8253 / ATH 2.4.1.) (Rhodobacter sphaeroides).